Here is a 769-residue protein sequence, read N- to C-terminus: P-selectin (769 aa).

Positions 1–32 (MASCPKAIWSWRFQRVVFRSVQLLCFSILIFE) are cleaved as a signal peptide. The Extracellular portion of the chain corresponds to 33–717 (LMTQKEVSAW…QEALTYIGGA (685 aa)). 2 N-linked (GlcNAc...) asparagine glycosylation sites follow: Asn-54 and Asn-80. The region spanning 58 to 158 (AFCQKYYTDL…PCGKRKRALC (101 aa)) is the C-type lectin domain. Intrachain disulfides connect Cys-60–Cys-158, Cys-131–Cys-150, Cys-163–Cys-174, Cys-168–Cys-183, Cys-185–Cys-194, Cys-200–Cys-244, Cys-230–Cys-257, Cys-262–Cys-306, Cys-292–Cys-319, Cys-324–Cys-368, Cys-354–Cys-381, Cys-386–Cys-430, Cys-416–Cys-443, Cys-448–Cys-492, Cys-478–Cys-505, Cys-510–Cys-554, Cys-540–Cys-567, Cys-581–Cys-625, Cys-611–Cys-638, Cys-643–Cys-687, and Cys-673–Cys-700. 3 residues coordinate Ca(2+): Glu-121, Asn-123, and Asn-124. A carbohydrate is bound at residue Asn-123. The a carbohydrate site is built by Glu-133 and Asn-146. Positions 146 and 147 each coordinate Ca(2+). The EGF-like domain occupies 159-195 (YRASCQDMSCSKQGECIETIGNYTCSCYPGFYGPECE). N-linked (GlcNAc...) asparagine glycosylation is present at Asn-180. 8 consecutive Sushi domains span residues 198-259 (RECG…QCVA), 260-321 (VQCP…VCKA), 322-383 (IACE…VCQA), 384-445 (LQCQ…ECQA), 446-507 (VTCA…TCEA), 508-569 (SKCP…SCKV), 579-640 (LRCP…TCRA), and 641-702 (VKCS…TCQA). N-linked (GlcNAc...) asparagine glycosylation is found at Asn-212 and Asn-219. Residue Asn-347 is glycosylated (N-linked (GlcNAc...) asparagine). N-linked (GlcNAc...) asparagine glycosylation occurs at Asn-398. N-linked (GlcNAc...) asparagine glycosylation is present at Asn-604. Asn-655, Asn-662, and Asn-680 each carry an N-linked (GlcNAc...) asparagine glycan. The chain crosses the membrane as a helical span at residues 718-734 (AAGTTGLVTSSILLALL). At 735–769 (RRRRRQKDDGKSPLNPQSHLGTYGVFTNAAFDPSP) the chain is on the cytoplasmic side. The disordered stretch occupies residues 740–769 (QKDDGKSPLNPQSHLGTYGVFTNAAFDPSP). The short motif at 757–760 (YGVF) is the Endocytosis signal element. Residues 760–769 (FTNAAFDPSP) form an interaction with SNX17 region.

This sequence belongs to the selectin/LECAM family. In terms of assembly, interacts with SNX17. Interacts with SELPLG/PSGL1 and PODXL2 and mediates neutrophil adhesion and leukocyte rolling. This interaction requires the sialyl-Lewis X epitope of SELPLG and PODXL2, and specific tyrosine sulfation on SELPLG. Interacts (via C-type lectin domain) with alpha-IIb/beta3 integrin ITGA2B:ITGB3 and alpha-V/beta-3 integrin ITGAV:ITGB3. Interacts with alpha5/beta1 integrin ITGA5:ITGB1 and alpha4/beta1 integrin ITGA4:ITGB.

It localises to the cell membrane. Functionally, ca(2+)-dependent receptor for myeloid cells that binds to carbohydrates on neutrophils and monocytes. Mediates the interaction of activated endothelial cells or platelets with leukocytes. The ligand recognized is sialyl-Lewis X. Mediates rapid rolling of leukocyte rolling over vascular surfaces during the initial steps in inflammation through interaction with SELPLG. Mediates cell-cell interactions and cell adhesion via the interaction with integrin alpha-IIb/beta3 (ITGA2B:ITGB3) and integrin alpha-V/beta-3 (ITGAV:ITGB3). The protein is P-selectin (SELP) of Ovis aries (Sheep).